We begin with the raw amino-acid sequence, 391 residues long: Phosphoglycerate kinase (391 aa).

Substrate is bound by residues 21 to 23 (DLN), Arg-36, 59 to 62 (HLGR), Arg-113, and Arg-146. ATP is bound by residues Lys-197, Glu-319, and 345–348 (GGDT).

It belongs to the phosphoglycerate kinase family. As to quaternary structure, monomer.

It is found in the cytoplasm. The enzyme catalyses (2R)-3-phosphoglycerate + ATP = (2R)-3-phospho-glyceroyl phosphate + ADP. It functions in the pathway carbohydrate degradation; glycolysis; pyruvate from D-glyceraldehyde 3-phosphate: step 2/5. The polypeptide is Phosphoglycerate kinase (Shewanella sp. (strain ANA-3)).